We begin with the raw amino-acid sequence, 395 residues long: Putative nickel insertion protein (395 aa).

It belongs to the LarC family.

In Archaeoglobus fulgidus (strain ATCC 49558 / DSM 4304 / JCM 9628 / NBRC 100126 / VC-16), this protein is Putative nickel insertion protein.